Reading from the N-terminus, the 560-residue chain is Serine palmitoyltransferase 2 (560 aa).

A helical transmembrane segment spans residues 65–85; sequence PMLVAVLTYVGYGVLTLFGYL. K377 carries the post-translational modification N6-(pyridoxal phosphate)lysine.

The protein belongs to the class-II pyridoxal-phosphate-dependent aminotransferase family. As to quaternary structure, component of the serine palmitoyltransferase (SPT) complex, which is composed of SPTLC1, SPTLC2 or SPTLC3 and SPTSSA or SPTSSB. The heterodimer consisting of SPTLC1 and SPTLC2/SPTLC3 forms the catalytic core of the enzyme, while SPTSSA or SPTSSB subunits determine substrate specificity. SPT also interacts with ORMDL proteins, especially ORMDL3, which negatively regulate SPT activity in the presence of ceramides. Forms dimers of heterodimers with SPTLC1. The cofactor is pyridoxal 5'-phosphate. Expressed in astrocytes.

It localises to the endoplasmic reticulum membrane. The enzyme catalyses L-serine + hexadecanoyl-CoA + H(+) = 3-oxosphinganine + CO2 + CoA. The catalysed reaction is octadecanoyl-CoA + L-serine + H(+) = 3-oxoeicosasphinganine + CO2 + CoA. The protein operates within lipid metabolism; sphingolipid metabolism. With respect to regulation, SPT complex catalytic activity is negatively regulated by ORMDL proteins, including ORMDL3, in the presence of ceramides. This mechanism allows to maintain ceramide levels at sufficient concentrations for the production of complex sphingolipids, but which prevents the accumulation of ceramides to levels that trigger apoptosis. Functionally, component of the serine palmitoyltransferase multisubunit enzyme (SPT) that catalyzes the initial and rate-limiting step in sphingolipid biosynthesis by condensing L-serine and activated acyl-CoA (most commonly palmitoyl-CoA) to form long-chain bases. The SPT complex is composed of SPTLC1, SPTLC2 or SPTLC3 and SPTSSA or SPTSSB. Within this complex, the heterodimer consisting of SPTLC1 and SPTLC2/SPTLC3 forms the catalytic core. The composition of the serine palmitoyltransferase (SPT) complex determines the substrate preference. The SPTLC1-SPTLC2-SPTSSA complex shows a strong preference for C16-CoA substrate, while the SPTLC1-SPTLC3-SPTSSA isozyme uses both C14-CoA and C16-CoA as substrates, with a slight preference for C14-CoA. The SPTLC1-SPTLC2-SPTSSB complex shows a strong preference for C18-CoA substrate, while the SPTLC1-SPTLC3-SPTSSB isozyme displays an ability to use a broader range of acyl-CoAs, without apparent preference. Crucial for adipogenesis. The polypeptide is Serine palmitoyltransferase 2 (Rattus norvegicus (Rat)).